The following is a 67-amino-acid chain: Large ribosomal subunit protein uL29 (67 aa).

This sequence belongs to the universal ribosomal protein uL29 family.

This chain is Large ribosomal subunit protein uL29, found in Polaromonas naphthalenivorans (strain CJ2).